The following is a 215-amino-acid chain: RxLR effector protein PITG_00582 (215 aa).

The N-terminal stretch at 1-19 (MLPYKTLLLALGFFFTVQC) is a signal peptide. The short motif at 39–51 (RLLRSPEKTDEER) is the RxLR-dEER element. Residues 81 to 149 (VAKQAKEMSN…QNELEKLAKQ (69 aa)) are a coiled coil.

It belongs to the RxLR effector family.

The protein localises to the secreted. It localises to the host cell membrane. Effector that might be involved in host plant infection. The protein is RxLR effector protein PITG_00582 of Phytophthora infestans (strain T30-4) (Potato late blight agent).